The primary structure comprises 415 residues: 26S proteasome regulatory subunit 6B (415 aa).

203–210 (GPPGCGKT) provides a ligand contact to ATP.

It belongs to the AAA ATPase family.

The protein resides in the cytoplasm. Its subcellular location is the nucleus. The 26S proteasome is involved in the ATP-dependent degradation of ubiquitinated proteins. The regulatory (or ATPase) complex confers ATP dependency and substrate specificity to the 26S complex. This Manduca sexta (Tobacco hawkmoth) protein is 26S proteasome regulatory subunit 6B.